Reading from the N-terminus, the 275-residue chain is Calcium uniporter protein, mitochondrial (275 aa).

The transit peptide at 1 to 28 (MNSFVIRNGFGLVRTFNTRLFTTSTQNL) directs the protein to the mitochondrion. The Mitochondrial matrix segment spans residues 29-165 (EGELKTILGQ…DRKAHRRATA (137 aa)). Residues 125–157 (VGLNKLIESKKSEINSLRQKIQPLEEKKQVIDR) adopt a coiled-coil conformation. A helical membrane pass occupies residues 166–186 (IIWTGLGYCFAQAAILARLTW). Topologically, residues 187–192 (WDLSWD) are mitochondrial intermembrane. Positions 191-199 (WDIIEPVSY) match the Selectivity filter motif. The helical transmembrane segment at 193-213 (IIEPVSYFLTFGSVLIGYTYF) threads the bilayer. Glutamate 195 contacts Ca(2+). Over 214-275 (TMTKTEFTYE…ELATKYDHTH (62 aa)) the chain is Mitochondrial matrix. A coiled-coil region spans residues 244–270 (PKEDYENLVQAIDKKEKELKELELATK).

This sequence belongs to the MCU (TC 1.A.77) family. As to quaternary structure, homooligomer.

Its subcellular location is the mitochondrion inner membrane. It catalyses the reaction Ca(2+)(in) = Ca(2+)(out). Inhibited by ruthenium red or its derivative Ru360. Mitochondrial inner membrane calcium uniporter that mediates calcium uptake into mitochondria. Constitutes a pore-forming and calcium-conducting subunit. Mitochondrial calcium homeostasis plays key roles in cellular physiology and regulates cell bioenergetics, cytoplasmic calcium signals and activation of cell death pathways. Sufficient to operate as a pore-forming channel without the need of calcium-sensor or auxiliary subunit. This Dictyostelium discoideum (Social amoeba) protein is Calcium uniporter protein, mitochondrial.